We begin with the raw amino-acid sequence, 270 residues long: Eukaryotic translation initiation factor 3 subunit G-1 (270 aa).

Residues 189–267 (AAIRISNLSE…LILSVEWSKP (79 aa)) form the RRM domain.

Belongs to the eIF-3 subunit G family. In terms of assembly, component of the eukaryotic translation initiation factor 3 (eIF-3) complex. The eIF-3 complex interacts with pix.

It is found in the cytoplasm. In terms of biological role, RNA-binding component of the eukaryotic translation initiation factor 3 (eIF-3) complex, which is involved in protein synthesis of a specialized repertoire of mRNAs and, together with other initiation factors, stimulates binding of mRNA and methionyl-tRNAi to the 40S ribosome. The eIF-3 complex specifically targets and initiates translation of a subset of mRNAs involved in cell proliferation. This subunit can bind 18S rRNA. The polypeptide is Eukaryotic translation initiation factor 3 subunit G-1 (Drosophila ananassae (Fruit fly)).